A 360-amino-acid chain; its full sequence is DNA replication and repair protein RecF (360 aa).

30 to 37 (GHNGSGKT) serves as a coordination point for ATP.

Belongs to the RecF family.

Its subcellular location is the cytoplasm. The RecF protein is involved in DNA metabolism; it is required for DNA replication and normal SOS inducibility. RecF binds preferentially to single-stranded, linear DNA. It also seems to bind ATP. This is DNA replication and repair protein RecF from Actinobacillus pleuropneumoniae serotype 3 (strain JL03).